Consider the following 145-residue polypeptide: Large-conductance mechanosensitive channel (145 aa).

The next 3 helical transmembrane spans lie at 14-34 (VMDL…VKSL), 38-58 (LIMP…YFLP), and 81-101 (GSFL…FLMV).

The protein belongs to the MscL family. Homopentamer.

The protein resides in the cell inner membrane. In terms of biological role, channel that opens in response to stretch forces in the membrane lipid bilayer. May participate in the regulation of osmotic pressure changes within the cell. The polypeptide is Large-conductance mechanosensitive channel (Rhizobium johnstonii (strain DSM 114642 / LMG 32736 / 3841) (Rhizobium leguminosarum bv. viciae)).